The primary structure comprises 256 residues: tRNA-cytidine(32) 2-sulfurtransferase (256 aa).

Positions 35 to 40 match the PP-loop motif motif; it reads SGGKDS. The [4Fe-4S] cluster site is built by Cys110, Cys113, and Cys201.

This sequence belongs to the TtcA family. As to quaternary structure, homodimer. The cofactor is Mg(2+). It depends on [4Fe-4S] cluster as a cofactor.

The protein localises to the cytoplasm. The enzyme catalyses cytidine(32) in tRNA + S-sulfanyl-L-cysteinyl-[cysteine desulfurase] + AH2 + ATP = 2-thiocytidine(32) in tRNA + L-cysteinyl-[cysteine desulfurase] + A + AMP + diphosphate + H(+). It functions in the pathway tRNA modification. Functionally, catalyzes the ATP-dependent 2-thiolation of cytidine in position 32 of tRNA, to form 2-thiocytidine (s(2)C32). The sulfur atoms are provided by the cysteine/cysteine desulfurase (IscS) system. The sequence is that of tRNA-cytidine(32) 2-sulfurtransferase from Coxiella burnetii (strain RSA 331 / Henzerling II).